A 202-amino-acid chain; its full sequence is Small ribosomal subunit protein uS4c (202 aa).

In terms of domain architecture, S4 RNA-binding spans 90 to 153 (MRLDNVIFRL…KSEAIISKNI (64 aa)).

It belongs to the universal ribosomal protein uS4 family. In terms of assembly, part of the 30S ribosomal subunit. Contacts protein S5. The interaction surface between S4 and S5 is involved in control of translational fidelity.

The protein localises to the plastid. The protein resides in the chloroplast. Its function is as follows. One of the primary rRNA binding proteins, it binds directly to 16S rRNA where it nucleates assembly of the body of the 30S subunit. With S5 and S12 plays an important role in translational accuracy. The chain is Small ribosomal subunit protein uS4c (rps4) from Hypopterygium laricinum (Moss).